Consider the following 309-residue polypeptide: Tagatose-6-phosphate kinase (309 aa).

The protein belongs to the carbohydrate kinase PfkB family. LacC subfamily.

It carries out the reaction D-tagatofuranose 6-phosphate + ATP = D-tagatofuranose 1,6-bisphosphate + ADP + H(+). Its pathway is carbohydrate metabolism; D-tagatose 6-phosphate degradation; D-glyceraldehyde 3-phosphate and glycerone phosphate from D-tagatose 6-phosphate: step 1/2. The protein is Tagatose-6-phosphate kinase of Streptococcus pyogenes serotype M5 (strain Manfredo).